Here is a 97-residue protein sequence, read N- to C-terminus: Large ribosomal subunit protein eL21 (97 aa).

The protein belongs to the eukaryotic ribosomal protein eL21 family.

The protein is Large ribosomal subunit protein eL21 of Methanococcus aeolicus (strain ATCC BAA-1280 / DSM 17508 / OCM 812 / Nankai-3).